Consider the following 1080-residue polypeptide: Protein HIR1 (1080 aa).

7 WD repeats span residues Gln-15–His-54, His-68–Thr-107, Gly-129–Thr-168, Val-171–Thr-210, Pro-232–Asn-275, Gly-278–Ile-336, and Val-340–Thr-381. 3 disordered regions span residues Met-430–Lys-479, Gln-520–His-546, and Asp-1051–Gln-1080. Positions Val-442–Thr-460 are enriched in polar residues. Residues Lys-469–Asp-496 are a coiled coil. Positions Gln-520 to Leu-539 are enriched in polar residues.

It belongs to the WD repeat HIR1 family.

Its subcellular location is the nucleus. Required for replication-independent chromatin assembly and for the periodic repression of histone gene transcription during the cell cycle. This is Protein HIR1 (HIR1) from Chaetomium globosum (strain ATCC 6205 / CBS 148.51 / DSM 1962 / NBRC 6347 / NRRL 1970) (Soil fungus).